The following is a 349-amino-acid chain: Isopentenyl-diphosphate delta-isomerase (349 aa).

A substrate-binding site is contributed by 5–6; it reads RK. Residues S61, 62–64, S92, and N120 each bind FMN; that span reads SMT. 92–94 is a substrate binding site; that stretch reads SMR. Q159 is a binding site for substrate. E160 contacts Mg(2+). FMN is bound by residues K189, T219, 269–271, and 290–291; these read GLR and AR.

It belongs to the IPP isomerase type 2 family. Homooctamer. Dimer of tetramers. FMN is required as a cofactor. NADPH serves as cofactor. Requires Mg(2+) as cofactor.

Its subcellular location is the cytoplasm. The enzyme catalyses isopentenyl diphosphate = dimethylallyl diphosphate. Functionally, involved in the biosynthesis of isoprenoids. Catalyzes the 1,3-allylic rearrangement of the homoallylic substrate isopentenyl (IPP) to its allylic isomer, dimethylallyl diphosphate (DMAPP). This Picrophilus torridus (strain ATCC 700027 / DSM 9790 / JCM 10055 / NBRC 100828 / KAW 2/3) protein is Isopentenyl-diphosphate delta-isomerase.